The sequence spans 546 residues: Membrane protein insertase YidC (546 aa).

A helical transmembrane segment spans residues 8–28; sequence ILLATVLSVGILILWQVIFPT. Positions 31–70 are disordered; sequence VPPKPAPPPAAEVAKPAAPASPAPGAAAPAVPAPPPDAPE. Positions 41–60 are enriched in low complexity; the sequence is AEVAKPAAPASPAPGAAAPA. A run of 5 helical transmembrane segments spans residues 326–346, 356–376, 422–442, 459–479, and 498–518; these read IDYGAVAKFFALFARGLLYVM, WGVAIILLTVLVRLVLFPLTY, LGGCLPMLLQMPVWFALYAAL, LTAHDPYFILPIAMGISSFVM, and FFPGFFTVIMLFVPGGLTLYI.

Belongs to the OXA1/ALB3/YidC family. Type 1 subfamily. As to quaternary structure, interacts with the Sec translocase complex via SecD. Specifically interacts with transmembrane segments of nascent integral membrane proteins during membrane integration.

It is found in the cell inner membrane. Functionally, required for the insertion and/or proper folding and/or complex formation of integral membrane proteins into the membrane. Involved in integration of membrane proteins that insert both dependently and independently of the Sec translocase complex, as well as at least some lipoproteins. Aids folding of multispanning membrane proteins. This chain is Membrane protein insertase YidC, found in Anaeromyxobacter sp. (strain K).